Reading from the N-terminus, the 304-residue chain is GTP cyclohydrolase FolE2 (304 aa).

The protein belongs to the GTP cyclohydrolase IV family.

The catalysed reaction is GTP + H2O = 7,8-dihydroneopterin 3'-triphosphate + formate + H(+). The protein operates within cofactor biosynthesis; 7,8-dihydroneopterin triphosphate biosynthesis; 7,8-dihydroneopterin triphosphate from GTP: step 1/1. In terms of biological role, converts GTP to 7,8-dihydroneopterin triphosphate. This Hahella chejuensis (strain KCTC 2396) protein is GTP cyclohydrolase FolE2.